The primary structure comprises 219 residues: Thymidylate kinase (219 aa).

10-17 contributes to the ATP binding site; it reads GLEGAGKT.

The protein belongs to the thymidylate kinase family.

It catalyses the reaction dTMP + ATP = dTDP + ADP. In terms of biological role, phosphorylation of dTMP to form dTDP in both de novo and salvage pathways of dTTP synthesis. The protein is Thymidylate kinase of Pectobacterium carotovorum subsp. carotovorum (strain PC1).